The following is a 256-amino-acid chain: NifU-like protein, mitochondrial (256 aa).

The CxxC motif motif lies at 196-199; sequence CTSC.

Belongs to the NifU family. As to quaternary structure, homodimer; in absence of BOL3, probably bridged by an iron-sulfure cluster. Interacts with BOL3. Interacts with apo-target proteins, such as ACO1, LYS4, ACO2 and SDH2.

The protein resides in the mitochondrion matrix. In terms of biological role, involved in iron homeostasis within the mitochondrion where it is involved in the assembly of iron-sulfur proteins. Together with BOL3, required during the last step of iron-sulfur protein assembly when the iron-sulfur cluster is inserted into the target protein. Required for protecting iron sulfur clusters from oxidative damage. The sequence is that of NifU-like protein, mitochondrial (NFU1) from Saccharomyces cerevisiae (strain ATCC 204508 / S288c) (Baker's yeast).